The following is a 1162-amino-acid chain: Carbamoyl phosphate synthase large chain (1162 aa).

The carboxyphosphate synthetic domain stretch occupies residues 1 to 456 (MPKRTDIKSI…SLQKALRGLE (456 aa)). Positions 129, 222, 228, 229, 261, 263, 268, 294, 295, 296, 338, and 352 each coordinate ATP. The region spanning 186–381 (ETEWQLGEVE…IAKVAAKLAV (196 aa)) is the ATP-grasp 1 domain. Q338, E352, and N354 together coordinate Mg(2+). Residues Q338, E352, and N354 each coordinate Mn(2+). An oligomerization domain region spans residues 457–613 (TGLTGFDEIA…PFVGQPRSEA (157 aa)). A carbamoyl phosphate synthetic domain region spans residues 614–1025 (EVSDRKKVVI…AFAKAQLGAG (412 aa)). Positions 742–954 (QKLLIKLDLN…IAKVAARIMA (213 aa)) constitute an ATP-grasp 2 domain. R778, T838, L840, E845, G870, I871, H872, S873, Q913, and E925 together coordinate ATP. Mg(2+) is bound by residues Q913, E925, and N927. Mn(2+) is bound by residues Q913, E925, and N927. The 137-residue stretch at 1026-1162 (VELPREGTVF…VRPLQDYFRS (137 aa)) folds into the MGS-like domain. Residues 1026 to 1162 (VELPREGTVF…VRPLQDYFRS (137 aa)) are allosteric domain.

Belongs to the CarB family. Composed of two chains; the small (or glutamine) chain promotes the hydrolysis of glutamine to ammonia, which is used by the large (or ammonia) chain to synthesize carbamoyl phosphate. Tetramer of heterodimers (alpha,beta)4. The cofactor is Mg(2+). It depends on Mn(2+) as a cofactor.

It catalyses the reaction hydrogencarbonate + L-glutamine + 2 ATP + H2O = carbamoyl phosphate + L-glutamate + 2 ADP + phosphate + 2 H(+). The catalysed reaction is hydrogencarbonate + NH4(+) + 2 ATP = carbamoyl phosphate + 2 ADP + phosphate + 2 H(+). It functions in the pathway amino-acid biosynthesis; L-arginine biosynthesis; carbamoyl phosphate from bicarbonate: step 1/1. It participates in pyrimidine metabolism; UMP biosynthesis via de novo pathway; (S)-dihydroorotate from bicarbonate: step 1/3. Functionally, large subunit of the glutamine-dependent carbamoyl phosphate synthetase (CPSase). CPSase catalyzes the formation of carbamoyl phosphate from the ammonia moiety of glutamine, carbonate, and phosphate donated by ATP, constituting the first step of 2 biosynthetic pathways, one leading to arginine and/or urea and the other to pyrimidine nucleotides. The large subunit (synthetase) binds the substrates ammonia (free or transferred from glutamine from the small subunit), hydrogencarbonate and ATP and carries out an ATP-coupled ligase reaction, activating hydrogencarbonate by forming carboxy phosphate which reacts with ammonia to form carbamoyl phosphate. This is Carbamoyl phosphate synthase large chain from Brucella melitensis biotype 1 (strain ATCC 23456 / CCUG 17765 / NCTC 10094 / 16M).